A 124-amino-acid chain; its full sequence is Large ribosomal subunit protein uL18 (124 aa).

The protein belongs to the universal ribosomal protein uL18 family. Part of the 50S ribosomal subunit; part of the 5S rRNA/L5/L18/L25 subcomplex. Contacts the 5S and 23S rRNAs.

Its function is as follows. This is one of the proteins that bind and probably mediate the attachment of the 5S RNA into the large ribosomal subunit, where it forms part of the central protuberance. The polypeptide is Large ribosomal subunit protein uL18 (Caldicellulosiruptor saccharolyticus (strain ATCC 43494 / DSM 8903 / Tp8T 6331)).